Here is a 745-residue protein sequence, read N- to C-terminus: Cytoskeleton-associated protein 2-like (745 aa).

The segment at 25–141 (AKGKLKSQNT…GELSRKPVGS (117 aa)) is disordered. The span at 30 to 61 (KSQNTKPYLKSKNNCQNQPPSKSTIRPKNDVT) shows a compositional bias: polar residues. Positions 109–120 (SSNPYSKPSSKS) are enriched in low complexity. The segment covering 121-133 (FQQCEAGSSTTGE) has biased composition (polar residues). The KEN box motif lies at 185–187 (KEN). The span at 192-203 (LTEPERKPDPKL) shows a compositional bias: basic and acidic residues. Disordered regions lie at residues 192 to 217 (LTEP…YNQT), 256 to 276 (VKSQ…KPSR), and 385 to 411 (RFNS…NNGF). Lys-198 is covalently cross-linked (Glycyl lysine isopeptide (Lys-Gly) (interchain with G-Cter in SUMO1); alternate). Lys-198 is covalently cross-linked (Glycyl lysine isopeptide (Lys-Gly) (interchain with G-Cter in SUMO2); alternate). Tyr-204 bears the Phosphotyrosine mark. Positions 389–411 (AIPSTPSIRPNGTSGNKHNNNGF) are enriched in polar residues. Position 742 is a phosphothreonine (Thr-742). Ser-745 carries the post-translational modification Phosphoserine.

Belongs to the CKAP2 family. Ubiquitinated by the anaphase promoting complex/cyclosome (APC/C).

Its subcellular location is the cytoplasm. The protein resides in the cytoskeleton. It localises to the spindle pole. Microtubule-associated protein required for mitotic spindle formation and cell-cycle progression in neural progenitor cells. The protein is Cytoskeleton-associated protein 2-like (CKAP2L) of Homo sapiens (Human).